The following is a 287-amino-acid chain: Tetraspanning orphan receptor (287 aa).

Over methionine 1–tyrosine 27 the chain is Extracellular. A helical membrane pass occupies residues isoleucine 28–isoleucine 48. The Cytoplasmic portion of the chain corresponds to threonine 49–leucine 55. Residues leucine 56–phenylalanine 76 traverse the membrane as a helical segment. Topologically, residues methionine 77–threonine 91 are extracellular. The chain crosses the membrane as a helical span at residues glycine 92–alanine 114. The Cytoplasmic segment spans residues phenylalanine 115 to cysteine 287. The tract at residues asparagine 165–proline 190 is disordered.

In terms of assembly, interacts (via N-terminal extracellular domain) with human C2a.

The protein localises to the cell membrane. Its function is as follows. Cell surface receptor that binds to human complement C2a protein. This results in inhibition of the classical and lectin pathways of complement activation, probably due to interference with binding of C2a to C4b and interference with cleavage by C1 or MASP2 such that C3 convertase cannot be formed. This infers resistance to complement-mediated cell lysis, allowing parasite survival and infection. The protein is Tetraspanning orphan receptor of Trypanosoma cruzi.